The chain runs to 263 residues: MALQIPSLLLLAAVVVLTVLSSPGTEGGNSERHFVHQFQPFCYFTNGTQRIRLVIRYIYNREEYVRFDSDVGEYRAVTELGRPDAEYWNKQYLERTRAELDTVCRHNYEKTETPTSLRRLEQPSVVISLSRTEALNHHNTLVCSVTDFYPAKIKVRWFRNGQEETVGVSSTQLIRNGDWTFQVLVMLEMTPRRGEVYTCHVEHPSLKSPITVEWRAQSESARSKMLSGIGGCVLGVIFLGLGLFIRHRSQKGPRGPPPAGLLQ.

Residues 1 to 27 (MALQIPSLLLLAAVVVLTVLSSPGTEG) form the signal peptide. A beta-1 region spans residues 28–120 (GNSERHFVHQ…TETPTSLRRL (93 aa)). Topologically, residues 28–224 (GNSERHFVHQ…RAQSESARSK (197 aa)) are extracellular. 2 disulfides stabilise this stretch: cysteine 42/cysteine 104 and cysteine 143/cysteine 199. An N-linked (GlcNAc...) asparagine glycan is attached at asparagine 46. Positions 121–214 (EQPSVVISLS…SLKSPITVEW (94 aa)) are beta-2. In terms of domain architecture, Ig-like C1-type spans 123–211 (PSVVISLSRT…EHPSLKSPIT (89 aa)). Positions 215–224 (RAQSESARSK) are connecting peptide. A helical transmembrane segment spans residues 225–245 (MLSGIGGCVLGVIFLGLGLFI). The Cytoplasmic portion of the chain corresponds to 246 to 263 (RHRSQKGPRGPPPAGLLQ).

It belongs to the MHC class II family. Post-translationally, ubiquitinated in immature dendritic cells leading to down-regulation of MHC class II.

It localises to the membrane. This is H-2 class II histocompatibility antigen, A-K beta chain (H2-Ab1) from Mus musculus (Mouse).